We begin with the raw amino-acid sequence, 91 residues long: UPF0213 protein NMA2126 (91 aa).

The GIY-YIG domain occupies 4–83 (SNWSLYLILC…AAQKRKLWEQ (80 aa)).

The protein belongs to the UPF0213 family.

This chain is UPF0213 protein NMA2126, found in Neisseria meningitidis serogroup A / serotype 4A (strain DSM 15465 / Z2491).